A 187-amino-acid polypeptide reads, in one-letter code: Pyridoxal 5'-phosphate synthase subunit PdxT (187 aa).

47–49 contacts L-glutamine; the sequence is GES. Residue Cys-76 is the Nucleophile of the active site. Residues Arg-102 and 128–129 each bind L-glutamine; that span reads IR. Active-site charge relay system residues include His-165 and Glu-167.

Belongs to the glutaminase PdxT/SNO family. In terms of assembly, in the presence of PdxS, forms a dodecamer of heterodimers. Only shows activity in the heterodimer.

It carries out the reaction aldehydo-D-ribose 5-phosphate + D-glyceraldehyde 3-phosphate + L-glutamine = pyridoxal 5'-phosphate + L-glutamate + phosphate + 3 H2O + H(+). The enzyme catalyses L-glutamine + H2O = L-glutamate + NH4(+). Its pathway is cofactor biosynthesis; pyridoxal 5'-phosphate biosynthesis. Its function is as follows. Catalyzes the hydrolysis of glutamine to glutamate and ammonia as part of the biosynthesis of pyridoxal 5'-phosphate. The resulting ammonia molecule is channeled to the active site of PdxS. This chain is Pyridoxal 5'-phosphate synthase subunit PdxT, found in Methanococcus maripaludis (strain C5 / ATCC BAA-1333).